A 749-amino-acid polypeptide reads, in one-letter code: Fibronectin type III and SPRY domain-containing protein 2 (749 aa).

The stretch at 205-317 forms a coiled coil; that stretch reads LNEALESAKD…TIEEMCHEEK (113 aa). Fibronectin type-III domains lie at 375 to 470 and 471 to 564; these read PVIN…TAPS and PPII…TIGS. In terms of domain architecture, B30.2/SPRY spans 546–744; sequence NMGGPSVRSE…KVHNGISMPK (199 aa).

As to quaternary structure, interacts with CMYA5. In cardiac muscles, identified in a complex composed of FSD2, CMYA5 and RYR2.

The protein localises to the nucleus. It is found in the sarcoplasmic reticulum. The protein resides in the cytoplasm. It localises to the perinuclear region. In Homo sapiens (Human), this protein is Fibronectin type III and SPRY domain-containing protein 2 (FSD2).